Reading from the N-terminus, the 287-residue chain is Large ribosomal subunit protein uL2 (287 aa).

Residues 221–287 (RGSVMNPCDH…SKRSRGGRDS (67 aa)) form a disordered region. A compositionally biased stretch (basic residues) spans 271 to 287 (LRKRRKTSKRSRGGRDS).

It belongs to the universal ribosomal protein uL2 family. Part of the 50S ribosomal subunit. Forms a bridge to the 30S subunit in the 70S ribosome.

One of the primary rRNA binding proteins. Required for association of the 30S and 50S subunits to form the 70S ribosome, for tRNA binding and peptide bond formation. It has been suggested to have peptidyltransferase activity; this is somewhat controversial. Makes several contacts with the 16S rRNA in the 70S ribosome. The protein is Large ribosomal subunit protein uL2 of Synechococcus sp. (strain CC9902).